The chain runs to 346 residues: MKLEGKKVTVHDMTLRDGMHPKRHQMTLEQMKSIACGLDAAGIPLIEVTHGDGLGGSSVNYGFPAHSDEEYLGAVIPLMKQAKVSALLLPGIGTVEHLKMAKDLGVNTIRVATHCTEADVSEQHITQSRKLGLDTVGFLMMAHMASPEKLVSQALLMQGYGANCIYVTDSAGYMLPDDVKARLSAVRAALKPETELGFHGHHNLAMGVANSIAAIEAGATRIDAAAAGLGAGAGNTPMEVFIAVCARMGIETGVDVFKIQDVAEDLVVPIMDHVIRIDRDSLTLGYAGVYSSFLLFAKRASAKYGVPARDILVELGRRGMVGGQEDMIEDTAMTMARERGLTLTAA.

The Pyruvate carboxyltransferase domain occupies 8–260; it reads VTVHDMTLRD…ETGVDVFKIQ (253 aa). 16–17 is a substrate binding site; sequence RD. Asp17 contacts Mn(2+). The Proton acceptor role is filled by His20. Substrate-binding residues include Ser170 and His199. The Mn(2+) site is built by His199 and His201. Residue Tyr290 coordinates substrate.

Belongs to the 4-hydroxy-2-oxovalerate aldolase family.

The catalysed reaction is (S)-4-hydroxy-2-oxopentanoate = acetaldehyde + pyruvate. In Metapseudomonas furukawaii (Pseudomonas furukawaii), this protein is 4-hydroxy-2-oxovalerate aldolase 2 (bphX3).